A 646-amino-acid chain; its full sequence is Long-chain fatty acid transport protein 1 (646 aa).

At 1–13 (MRAPGAGSASVAS) the chain is on the extracellular side. A helical membrane pass occupies residues 14-34 (LVLLWLLGLPWTWSTAAALGV). Over 35-646 (YVGGGGWRFL…TRICSGAFAL (612 aa)) the chain is Cytoplasmic. A sufficient for oligomerization region spans residues 191-475 (EMSGELGKSL…YISESATSKK (285 aa)). 246 to 257 (YIYTSGTTGLPK) contacts AMP.

Belongs to the ATP-dependent AMP-binding enzyme family. As to quaternary structure, self-associates. May function as a homodimer. Interacts with EPRS1; mediates the translocation of SLC27A1 from the cytoplasm to the plasma membrane thereby increasing the uptake of long-chain fatty acids. Interacts with DGAT2 and this interaction is enhanced in the presence of ZFYVE1.

It localises to the cell membrane. The protein resides in the endomembrane system. It is found in the cytoplasm. The enzyme catalyses a fatty acid(in) = a fatty acid(out). It carries out the reaction (9Z)-octadecenoate(out) = (9Z)-octadecenoate(in). It catalyses the reaction hexadecanoate(out) = hexadecanoate(in). The catalysed reaction is (5Z,8Z,11Z,14Z)-eicosatetraenoate(out) = (5Z,8Z,11Z,14Z)-eicosatetraenoate(in). The enzyme catalyses (9Z,12Z)-octadecadienoate(out) = (9Z,12Z)-octadecadienoate(in). It carries out the reaction a long-chain fatty acid + ATP + CoA = a long-chain fatty acyl-CoA + AMP + diphosphate. It catalyses the reaction (5Z,8Z,11Z,14Z)-eicosatetraenoate + ATP + CoA = (5Z,8Z,11Z,14Z)-eicosatetraenoyl-CoA + AMP + diphosphate. The catalysed reaction is a very long-chain fatty acid + ATP + CoA = a very long-chain fatty acyl-CoA + AMP + diphosphate. The enzyme catalyses tetracosanoate + ATP + CoA = tetracosanoyl-CoA + AMP + diphosphate. Its activity is regulated as follows. Inhibited by Triacsin C. Its function is as follows. Mediates the import of long-chain fatty acids (LCFA) into the cell by facilitating their transport at the plasma membrane. Also functions as an acyl-CoA ligase catalyzing the ATP-dependent formation of fatty acyl-CoA using LCFA and very-long-chain fatty acids (VLCFA) as substrates, which prevents fatty acid efflux from cells and might drive more fatty acid uptake. May act directly as a bona fide transporter, or alternatively, in a cytoplasmic or membrane-associated multimeric protein complex to trap and draw fatty acids towards accumulation. Plays a pivotal role in regulating available LCFA substrates from exogenous sources in tissues undergoing high levels of beta-oxidation or triglyceride synthesis. May be involved in regulation of cholesterol metabolism. Probably involved in fatty acid transport across the blood barrier. This chain is Long-chain fatty acid transport protein 1, found in Bos taurus (Bovine).